The following is a 211-amino-acid chain: Large ribosomal subunit protein uL3 (211 aa).

It belongs to the universal ribosomal protein uL3 family. Part of the 50S ribosomal subunit. Forms a cluster with proteins L14 and L19.

Its function is as follows. One of the primary rRNA binding proteins, it binds directly near the 3'-end of the 23S rRNA, where it nucleates assembly of the 50S subunit. The protein is Large ribosomal subunit protein uL3 of Citrifermentans bemidjiense (strain ATCC BAA-1014 / DSM 16622 / JCM 12645 / Bem) (Geobacter bemidjiensis).